Reading from the N-terminus, the 630-residue chain is Betaine/ectoine transporter LcoP (630 aa).

Residues 1–13 (MSTNSGNNLPESQ) show a composition bias toward polar residues. The segment at 1 to 28 (MSTNSGNNLPESQESPEEPHYPHDTHPG) is disordered. Residues 17-26 (EEPHYPHDTH) are compositionally biased toward basic and acidic residues. 12 helical membrane passes run 47–67 (TVFGVTAALILAFIAWGISSP), 85–105 (TGWLLNFVMLIGIGTMLYIAF), 125–145 (FSWIAMMFGAGIGVGIFFFGP), 177–197 (FHWGLSAWGLYALVGGALAYS), 230–250 (MAIIATLFGTAATLGLSAIQV), 267–287 (ILIAIIAILTIGFIISSVSGV), 299–319 (ISLTLGLVLFVFITGPTLFLL), 354–374 (WTAFYWAWWIAWTPFVGMFIA), 385–405 (FALITMAIPSFILILAFTIFG), 436–456 (LPLYSITPFILIFVLAVFFVT), 479–499 (LIVVFWGLCMMGIAVVMLLTG), and 510–530 (LTILIAIPFALVLIVMAIAFI). Residues 611–630 (WADGWTPESTEEGEVDAKKD) form a disordered region.

It belongs to the BCCT transporter (TC 2.A.15) family.

Its subcellular location is the cell membrane. Its activity is regulated as follows. Uptake is activated by hyperosmotic stress. Shows a small but significant chill stimulation around 15 degrees Celsius. Its function is as follows. Involved in the uptake of osmoprotectants. Can transport betaine and ectoine. Na(+) is probably the coupling ion. This Corynebacterium glutamicum (strain ATCC 13032 / DSM 20300 / JCM 1318 / BCRC 11384 / CCUG 27702 / LMG 3730 / NBRC 12168 / NCIMB 10025 / NRRL B-2784 / 534) protein is Betaine/ectoine transporter LcoP.